A 315-amino-acid polypeptide reads, in one-letter code: N-acetylneuraminate lyase (315 aa).

Residues serine 59 and serine 60 each coordinate aceneuramate. The active-site Proton donor is tyrosine 149. The active-site Schiff-base intermediate with substrate is the lysine 177. The aceneuramate site is built by serine 179, glycine 202, aspartate 204, glutamate 205, and glycine 221.

This sequence belongs to the DapA family. NanA subfamily. As to quaternary structure, homotetramer.

The protein resides in the cytoplasm. The enzyme catalyses aceneuramate = aldehydo-N-acetyl-D-mannosamine + pyruvate. Its pathway is amino-sugar metabolism; N-acetylneuraminate degradation; D-fructose 6-phosphate from N-acetylneuraminate: step 1/5. Functionally, catalyzes the reversible aldol cleavage of N-acetylneuraminic acid (sialic acid; Neu5Ac) to form pyruvate and N-acetylmannosamine (ManNAc) via a Schiff base intermediate. Cannot use 2,7-anhydro-Neu5Ac. Involved in the degradation of sialic acid, which is present in the host mucus layer and represents a much-coveted source of nutrients for R.gnavus, a prevalent member of the normal gut microbiota. The polypeptide is N-acetylneuraminate lyase (Mediterraneibacter gnavus (strain ATCC 29149 / DSM 114966 / JCM 6515 / VPI C7-9) (Ruminococcus gnavus)).